A 419-amino-acid chain; its full sequence is MSLLAIGINHNTASVELREKVAFGPEKLSLALNQLSTSSHVKGGVILSTCNRTEIYCDVRSASKNKVIEWLSQFHQVSLDELKPSLYVHEEQAAIRHLMRVACGLDSLVLGEPQILGQVKQAYAEARENHAVNPATEKLFQKAFSVAKRVRTETEIGGSAVSVAYAACTLAKHIFESLADATVLLVGAGETIELVAKHLAGHHCKRMIVANRTRERALSLAQQFGADVIALNEIPDYLAQADIVISSTASPLPIIGKGMVESALKARRHQPMLLVDIAVPRDIEPQVGKLNDAYLYSVDDLQSIVDSNIEQRKVEAIQAEAIVSEESATFMSWMRSLQAVDSIRDYRKQANEAREELLNKSLQALAAGGDPEKLLIELSNKLTNKLIHTPTRALQTAAEQGEPAKLAVIRQSLGLDDLN.

Residues 49–52, Ser-107, 112–114, and Gln-118 each bind substrate; these read TCNR and EPQ. Cys-50 acts as the Nucleophile in catalysis. 187–192 contributes to the NADP(+) binding site; that stretch reads GAGETI.

The protein belongs to the glutamyl-tRNA reductase family. In terms of assembly, homodimer.

It catalyses the reaction (S)-4-amino-5-oxopentanoate + tRNA(Glu) + NADP(+) = L-glutamyl-tRNA(Glu) + NADPH + H(+). Its pathway is porphyrin-containing compound metabolism; protoporphyrin-IX biosynthesis; 5-aminolevulinate from L-glutamyl-tRNA(Glu): step 1/2. Its function is as follows. Catalyzes the NADPH-dependent reduction of glutamyl-tRNA(Glu) to glutamate 1-semialdehyde (GSA). This Vibrio cholerae serotype O1 (strain ATCC 39541 / Classical Ogawa 395 / O395) protein is Glutamyl-tRNA reductase.